Reading from the N-terminus, the 68-residue chain is conotoxin S11.3 (68 aa).

Positions 1–26 are cleaved as a signal peptide; sequence MMFRLTSVSCFLLVIVCLNLFQVVLT. 4 disulfides stabilise this stretch: Cys-29–Cys-43, Cys-36–Cys-48, Cys-42–Cys-52, and Cys-47–Cys-56. Residue Tyr-60 is modified to Tyrosine amide. Residues 64-68 constitute a propeptide that is removed on maturation; sequence ATFQE.

It belongs to the conotoxin I2 superfamily. In terms of tissue distribution, expressed by the venom duct.

It localises to the secreted. The protein is conotoxin S11.3 of Conus striatus (Striated cone).